Here is a 204-residue protein sequence, read N- to C-terminus: Peptide chain release factor homolog (204 aa).

An rRNA-recognition domain, N-terminus region spans residues 2-98 (ILLQLSSAQG…KNWFLGIGRF (97 aa)). Positions 99 to 107 (TADEQEQSD) are linker 1. Positions 108–161 (AIRYETLRSSGPGGQHVNKTDSAVRATHLASGISVKVQSERSQHANKRLARLLI) are GGQ domain. The GGQ motif motif lies at 120–122 (GGQ). The interval 162-179 (AWKLEQQQQENSAALKSQ) is linker 2. An rRNA-recognition domain, C-terminus region spans residues 180–204 (RRMFHHQIERGNPRRTFTGMAFIEG).

The protein belongs to the prokaryotic/mitochondrial release factor family. Found in the A site of damaged 70S ribosomes, but not in undamaged ribosomes. Contacts (damaged) 16S rRNA, 23S rRNA and ribosomal protein uS12, but not mRNA.

In terms of biological role, peptide chain release-like factor that acts on 70S ribosomes with specific damage to their decoding center (cleavage of 16S rRNA between adenine-1493 and guanosine-1494, E.coli 16S rRNA numbering). Probably acts as a peptidyl-tRNA hydrolase, allowing release of the nascent chain and dissociation of the 30S and 50S subunits. Can release mRNA as short as 19 nucleotides (nt, mRNA-19, which has a single amino acid in the P-site and only a single nt in the A-site) from the ribosome. This specific cleavage is inflicted by CdiA (ECL_04451) or by colicin E3-type (ColE3) proteins. In vivo the PrfH-RtcB2 pair restores growth in the presence of ribotoxins that specifically create this damage. The polypeptide is Peptide chain release factor homolog (Escherichia coli (strain ATCC 25922 / DSM 1103 / LMG 8223 / NCIMB 12210 / NCTC 12241 / WDCM 00013 / Seattle 1946)).